The sequence spans 137 residues: MHEVRVLAFQKIYSIDINQSAMDDIFDIFNIEDKGLDIENESIKSFYSSLVNGTFNNLEHIDSLIRDISWNWSLDRMDKVDLAILRMGVYSLKFQNFENSKRAVIDDAILIAKKYGSKNSCKFINGILDALLKNMEN.

The protein belongs to the NusB family.

Involved in transcription antitermination. Required for transcription of ribosomal RNA (rRNA) genes. Binds specifically to the boxA antiterminator sequence of the ribosomal RNA (rrn) operons. In Borreliella afzelii (strain PKo) (Borrelia afzelii), this protein is Transcription antitermination protein NusB.